A 216-amino-acid chain; its full sequence is Adenylate kinase (216 aa).

Position 10–15 (10–15) interacts with ATP; sequence GAGKGT. The interval 30–59 is NMP; the sequence is STGDMLRAAVGVGTEVGKRAKAVMDAGKLV. Residues T31, R36, 57–59, 85–88, and Q92 each bind AMP; these read KLV and GFPR. The segment at 126–163 is LID; the sequence is GRYTCAQCGTVYHDTDKVPVEEGVCDKCGSTHFKRRPD. An ATP-binding site is contributed by R127. C130 and C133 together coordinate Zn(2+). 136–137 lines the ATP pocket; that stretch reads VY. Positions 150 and 153 each coordinate Zn(2+). AMP-binding residues include R160 and R172. A200 serves as a coordination point for ATP.

This sequence belongs to the adenylate kinase family. Monomer.

It localises to the cytoplasm. The catalysed reaction is AMP + ATP = 2 ADP. It participates in purine metabolism; AMP biosynthesis via salvage pathway; AMP from ADP: step 1/1. Catalyzes the reversible transfer of the terminal phosphate group between ATP and AMP. Plays an important role in cellular energy homeostasis and in adenine nucleotide metabolism. This Rhizobium etli (strain CIAT 652) protein is Adenylate kinase.